Reading from the N-terminus, the 239-residue chain is Small ribosomal subunit protein uS3c (239 aa).

The KH type-2 domain maps to 43-139 (IKNYIQKNRK…RLNIGIEKVK (97 aa)).

It belongs to the universal ribosomal protein uS3 family. In terms of assembly, part of the 30S ribosomal subunit.

It localises to the plastid. The protein resides in the chloroplast. The protein is Small ribosomal subunit protein uS3c (rps3) of Oryza nivara (Indian wild rice).